A 184-amino-acid polypeptide reads, in one-letter code: Ribosome-recycling factor (184 aa).

The protein belongs to the RRF family.

It localises to the cytoplasm. Its function is as follows. Responsible for the release of ribosomes from messenger RNA at the termination of protein biosynthesis. May increase the efficiency of translation by recycling ribosomes from one round of translation to another. The sequence is that of Ribosome-recycling factor from Clostridium botulinum (strain Okra / Type B1).